Here is a 287-residue protein sequence, read N- to C-terminus: DDRGK domain-containing protein 1 (287 aa).

At 1-5 the chain is on the lumenal side; sequence MDLIL. A helical membrane pass occupies residues 6–26; that stretch reads LLGIAVALLVILVTLFFFTKG. The Cytoplasmic portion of the chain corresponds to 27-287; that stretch reads KGSQESGKYN…LINLVPVSAE (261 aa). Disordered stretches follow at residues 28–102 and 135–164; these read GSQE…KRAK and KVEA…RQEH. A compositionally biased stretch (low complexity) spans 44–68; sequence AQAAPRRAQVVRNQRNRARVAAAPA. A compositionally biased stretch (basic and acidic residues) spans 85 to 102; that stretch reads IPHADFNGEKMGAKKRAK.

Belongs to the DDRGK1 family. In terms of assembly, interacts with Atg9; the interaction is transient.

It localises to the endoplasmic reticulum membrane. Functionally, substrate adapter for ufmylation, the covalent attachment of the ubiquitin-like modifier UFM1 to substrate proteins. Required for ufmylation of Atg9; protects the nervous system during aging, possibly by stabilizing Atg9 and supporting its function. This chain is DDRGK domain-containing protein 1, found in Culex quinquefasciatus (Southern house mosquito).